Consider the following 710-residue polypeptide: Probable GTP diphosphokinase RSH2, chloroplastic (710 aa).

Residues 1-63 (MVVATTIALY…SSLFSSASVK (63 aa)) constitute a chloroplast transit peptide. The 105-residue stretch at 233–337 (YLQHCVETAM…IKLADRLHNM (105 aa)) folds into the HD domain.

This sequence belongs to the RelA/SpoT family.

Its subcellular location is the plastid. It is found in the chloroplast. It carries out the reaction GTP + ATP = guanosine 3'-diphosphate 5'-triphosphate + AMP. In terms of biological role, probable ppGpp (guanosine 3'-diphosphate 5'-diphosphate) synthetase that may be involved in a rapid plant ppGpp-mediated response to pathogens and other stresses. This Arabidopsis thaliana (Mouse-ear cress) protein is Probable GTP diphosphokinase RSH2, chloroplastic (RSH2).